Consider the following 105-residue polypeptide: Large ribosomal subunit protein uL24 (105 aa).

Belongs to the universal ribosomal protein uL24 family. As to quaternary structure, part of the 50S ribosomal subunit.

In terms of biological role, one of two assembly initiator proteins, it binds directly to the 5'-end of the 23S rRNA, where it nucleates assembly of the 50S subunit. Its function is as follows. One of the proteins that surrounds the polypeptide exit tunnel on the outside of the subunit. The chain is Large ribosomal subunit protein uL24 from Vibrio campbellii (strain ATCC BAA-1116).